We begin with the raw amino-acid sequence, 271 residues long: 3-methyl-2-oxobutanoate hydroxymethyltransferase (271 aa).

The Mg(2+) site is built by aspartate 53 and aspartate 92. 3-methyl-2-oxobutanoate is bound by residues 53–54, aspartate 92, and lysine 120; that span reads DS. Mg(2+) is bound at residue glutamate 122. The active-site Proton acceptor is the glutamate 189.

The protein belongs to the PanB family. Homodecamer; pentamer of dimers. Mg(2+) serves as cofactor.

It localises to the cytoplasm. It catalyses the reaction 3-methyl-2-oxobutanoate + (6R)-5,10-methylene-5,6,7,8-tetrahydrofolate + H2O = 2-dehydropantoate + (6S)-5,6,7,8-tetrahydrofolate. The protein operates within cofactor biosynthesis; (R)-pantothenate biosynthesis; (R)-pantoate from 3-methyl-2-oxobutanoate: step 1/2. In terms of biological role, catalyzes the reversible reaction in which hydroxymethyl group from 5,10-methylenetetrahydrofolate is transferred onto alpha-ketoisovalerate to form ketopantoate. In Burkholderia mallei (strain NCTC 10247), this protein is 3-methyl-2-oxobutanoate hydroxymethyltransferase.